Consider the following 612-residue polypeptide: Alpha-1,3-galactosidase B (612 aa).

The signal sequence occupies residues 1–19 (MKWYLWGAVVLLYSLFGSA). Cys-20 is lipidated: N-palmitoyl cysteine. Cys-20 carries S-diacylglycerol cysteine lipidation. 3 PbH1 repeats span residues 431–453 (TPTV…LFST), 454–476 (PRQT…LLCG), and 487–536 (CRNV…VIDA).

This sequence belongs to the glycosyl hydrolase 110 family. B subfamily.

The protein resides in the cell membrane. The enzyme catalyses Hydrolysis of terminal, non-reducing branched (1-&gt;3)-alpha-D-galactosidic residues, producing free D-galactose.. The catalysed reaction is Hydrolysis of terminal, non-reducing linear (1-&gt;3)-alpha-D-galactosidic residues, producing free D-galactose.. It catalyses the reaction Hydrolysis of terminal, non-reducing alpha-D-galactose residues in alpha-D-galactosides, including galactose oligosaccharides, galactomannans and galactolipids.. Functionally, alpha-galactosidase. Removes both branched alpha-1,3-linked galactose residues of blood group B antigens and linear alpha-1,3-linked galactose structures. The protein is Alpha-1,3-galactosidase B (glaB) of Parabacteroides distasonis (strain ATCC 8503 / DSM 20701 / CIP 104284 / JCM 5825 / NCTC 11152).